Consider the following 505-residue polypeptide: MITLTGHTLTIEEMKRLLLEGEGVTACPTSMQKVAECREVVEKIVEDGKVVYGITTGFGKFSDVLIQKDDVKALQHNLIQSHACGIGEPFPEEVSRGMLILRANTMLKGVSGVRPLVVNMLLEFVNRKIHPVVPQQGSLGASGDLAPLSHLALVLLGEGEVFYKGKRVHAMVALTEEGLEPIELEAKEGLALINGTQAMTAQGVLSYIEAEATAYQAELIASMTIEGLQGIIDAFDENVHKARGYKEQVEVASRIRDILHDSKLTTKQGELRVQDAYSLRCIPQVHGASWQVLNYVKEKLEIEMNAATDNPLIFDGGEKVISGGNFHGQPIAFAMDFLKVGMAELANISERRIERLVNPQLNDLPPFLSPEPGLQSGAMIMQYAAASLVSENKTLAHPASVDSIPSSANQEDHVSMGTIASRHAHQIIQNVRRVLSIEMICAMQAAEYRGIENMSTVTKSFYHQGRQQVPSITNDRIFSTDIENIAHWLKTNYSIKERLDVNAAL.

The segment at residues 141–143 (ASG) is a cross-link (5-imidazolinone (Ala-Gly)). Serine 142 is modified (2,3-didehydroalanine (Ser)).

It belongs to the PAL/histidase family. In terms of processing, contains an active site 4-methylidene-imidazol-5-one (MIO), which is formed autocatalytically by cyclization and dehydration of residues Ala-Ser-Gly.

The protein resides in the cytoplasm. The catalysed reaction is L-histidine = trans-urocanate + NH4(+). The protein operates within amino-acid degradation; L-histidine degradation into L-glutamate; N-formimidoyl-L-glutamate from L-histidine: step 1/3. The sequence is that of Histidine ammonia-lyase from Bacillus cereus (strain ATCC 10987 / NRS 248).